Here is a 187-residue protein sequence, read N- to C-terminus: Ribosome-recycling factor (187 aa).

Belongs to the RRF family.

The protein localises to the cytoplasm. In terms of biological role, responsible for the release of ribosomes from messenger RNA at the termination of protein biosynthesis. May increase the efficiency of translation by recycling ribosomes from one round of translation to another. This is Ribosome-recycling factor from Petrotoga mobilis (strain DSM 10674 / SJ95).